The chain runs to 102 residues: Citrate lyase acyl carrier protein (102 aa).

Ser14 is modified (O-(phosphoribosyl dephospho-coenzyme A)serine).

The protein belongs to the CitD family. As to quaternary structure, oligomer with a subunit composition of (alpha,beta,gamma)6.

The protein localises to the cytoplasm. Its function is as follows. Covalent carrier of the coenzyme of citrate lyase. This chain is Citrate lyase acyl carrier protein, found in Streptococcus mutans serotype c (strain ATCC 700610 / UA159).